A 280-amino-acid polypeptide reads, in one-letter code: Tumor necrosis factor ligand superfamily member 6 (280 aa).

Residues Met1 to Leu80 are Cytoplasmic-facing. The disordered stretch occupies residues Ser20 to Lys71. Residues Arg43–Pro69 show a composition bias toward pro residues. The chain crosses the membrane as a helical; Signal-anchor for type II membrane protein span at residues Cys81–Phe101. Over Gln102–Leu280 the chain is Extracellular. In terms of domain architecture, THD spans Lys144 to Leu280. Asn183 carries N-linked (GlcNAc...) asparagine glycosylation. An intrachain disulfide couples Cys201 to Cys232. N-linked (GlcNAc...) asparagine glycans are attached at residues Asn249 and Asn259.

This sequence belongs to the tumor necrosis factor family. Homotrimer. Interacts with ARHGAP9, BAIAP2L1, BTK, CACNB3, CACNB4, CRK, DLG2, DNMBP, DOCK4, EPS8L3, FGR, FYB1, FYN, HCK, ITK, ITSN2, KALRN, LYN, MACC1, MIA, MPP4, MYO15A, NCF1, NCK1, NCK2, NCKIPSD, OSTF1, PIK3R1, PSTPIP1, RIMBP3C, SAMSN1, SH3GL3, SH3PXD2B, SH3PXD2A, SH3RF2, SKAP2, SNX33, SNX9, SORBS3, SPTA1, SRC, SRGAP1, SRGAP2, SRGAP3, TEC, TJP3 and YES1. Post-translationally, the soluble form derives from the membrane form by proteolytic processing. The membrane-bound form undergoes two successive intramembrane proteolytic cleavages. The first one is processed by ADAM10 producing an N-terminal fragment, which lacks the receptor-binding extracellular domain. This ADAM10-processed FasL (FasL APL) remnant form is still membrane anchored and further processed by SPPL2A that liberates the FasL intracellular domain (FasL ICD). FasL shedding by ADAM10 is a prerequisite for subsequent intramembrane cleavage by SPPL2A in T-cells. Phosphorylated by FGR on tyrosine residues; this is required for ubiquitination and subsequent internalization. In terms of processing, N-glycosylated. Glycosylation enhances apoptotic activity. Post-translationally, monoubiquitinated.

It localises to the cell membrane. It is found in the cytoplasmic vesicle lumen. The protein resides in the lysosome lumen. Its subcellular location is the secreted. The protein localises to the nucleus. Cytokine that binds to TNFRSF6/FAS, a receptor that transduces the apoptotic signal into cells. Involved in cytotoxic T-cell-mediated apoptosis, natural killer cell-mediated apoptosis and in T-cell development. Initiates fratricidal/suicidal activation-induced cell death (AICD) in antigen-activated T-cells contributing to the termination of immune responses. TNFRSF6/FAS-mediated apoptosis has also a role in the induction of peripheral tolerance. Binds to TNFRSF6B/DcR3, a decoy receptor that blocks apoptosis. Its function is as follows. Induces FAS-mediated activation of NF-kappa-B, initiating non-apoptotic signaling pathways. Can induce apoptosis but does not appear to be essential for this process. In terms of biological role, cytoplasmic form induces gene transcription inhibition. This is Tumor necrosis factor ligand superfamily member 6 (FASLG) from Felis catus (Cat).